Here is a 376-residue protein sequence, read N- to C-terminus: GDSL esterase/lipase At5g55050 (376 aa).

A signal peptide spans 1–29 (MPTNNTPFLTIFLLFLGLLRFDSFPGLEA). The Nucleophile role is filled by Ser46. N-linked (GlcNAc...) asparagine glycosylation is found at Asn134 and Asn245. Residues Asp340 and His344 contribute to the active site.

The protein belongs to the 'GDSL' lipolytic enzyme family.

It localises to the secreted. The sequence is that of GDSL esterase/lipase At5g55050 from Arabidopsis thaliana (Mouse-ear cress).